The following is a 130-amino-acid chain: Phosphoribosyl-AMP cyclohydrolase (130 aa).

Position 78 (aspartate 78) interacts with Mg(2+). Cysteine 79 is a binding site for Zn(2+). Residues aspartate 80 and aspartate 82 each coordinate Mg(2+). Zn(2+)-binding residues include cysteine 96 and cysteine 103.

Belongs to the PRA-CH family. As to quaternary structure, homodimer. Mg(2+) is required as a cofactor. Requires Zn(2+) as cofactor.

It is found in the cytoplasm. The enzyme catalyses 1-(5-phospho-beta-D-ribosyl)-5'-AMP + H2O = 1-(5-phospho-beta-D-ribosyl)-5-[(5-phospho-beta-D-ribosylamino)methylideneamino]imidazole-4-carboxamide. It participates in amino-acid biosynthesis; L-histidine biosynthesis; L-histidine from 5-phospho-alpha-D-ribose 1-diphosphate: step 3/9. Its function is as follows. Catalyzes the hydrolysis of the adenine ring of phosphoribosyl-AMP. In Nitrosospira multiformis (strain ATCC 25196 / NCIMB 11849 / C 71), this protein is Phosphoribosyl-AMP cyclohydrolase.